The chain runs to 187 residues: Lipid A acyltransferase PagP (187 aa).

An N-terminal signal peptide occupies residues 1–26 (MIVAKKYFLVLSFLFVQFALLPQAFS). Active-site residues include His59, Asp102, and Ser103.

The protein belongs to the lipid A palmitoyltransferase family. In terms of assembly, homodimer.

Its subcellular location is the cell outer membrane. It carries out the reaction a lipid A + a 1,2-diacyl-sn-glycero-3-phosphocholine = a hepta-acyl lipid A + a 2-acyl-sn-glycero-3-phosphocholine. The catalysed reaction is a lipid IVA + a 1,2-diacyl-sn-glycero-3-phosphocholine = a lipid IVB + a 2-acyl-sn-glycero-3-phosphocholine. The enzyme catalyses a lipid IIA + a 1,2-diacyl-sn-glycero-3-phosphocholine = a lipid IIB + a 2-acyl-sn-glycero-3-phosphocholine. Functionally, transfers a fatty acid residue from the sn-1 position of a phospholipid to the N-linked hydroxyfatty acid chain on the proximal unit of lipid A or its precursors. The chain is Lipid A acyltransferase PagP from Citrobacter koseri (strain ATCC BAA-895 / CDC 4225-83 / SGSC4696).